Consider the following 647-residue polypeptide: Threonine--tRNA ligase (647 aa).

The region spanning methionine 1–threonine 61 is the TGS domain. Residues aspartate 240 to proline 538 form a catalytic region. Zn(2+)-binding residues include cysteine 334, histidine 385, and histidine 515.

This sequence belongs to the class-II aminoacyl-tRNA synthetase family. As to quaternary structure, homodimer. Zn(2+) is required as a cofactor.

The protein resides in the cytoplasm. The catalysed reaction is tRNA(Thr) + L-threonine + ATP = L-threonyl-tRNA(Thr) + AMP + diphosphate + H(+). Catalyzes the attachment of threonine to tRNA(Thr) in a two-step reaction: L-threonine is first activated by ATP to form Thr-AMP and then transferred to the acceptor end of tRNA(Thr). Also edits incorrectly charged L-seryl-tRNA(Thr). This chain is Threonine--tRNA ligase, found in Streptococcus pyogenes serotype M6 (strain ATCC BAA-946 / MGAS10394).